The sequence spans 438 residues: Glyceraldehyde-3-phosphate dehydrogenase B, chloroplastic (438 aa).

The transit peptide at 1 to 53 (CLSKKFEVAEFAGLRSSGCVTFSNKESSFFDVVSAQLTPKTTRSTPVKGETVA) directs the protein to the chloroplast. Residues 64–65 (RI), D88, and R133 each bind NADP(+). Residues 207–209 (SCT), T238, R253, 266–267 (TG), and R289 contribute to the D-glyceraldehyde 3-phosphate site. C208 acts as the Nucleophile in catalysis. Residue N372 participates in NADP(+) binding.

This sequence belongs to the glyceraldehyde-3-phosphate dehydrogenase family. As to quaternary structure, tetramer of either four A chains (GAPDH 2) or two A and two B chains (GAPDH 1).

Its subcellular location is the plastid. The protein resides in the chloroplast. The catalysed reaction is D-glyceraldehyde 3-phosphate + phosphate + NADP(+) = (2R)-3-phospho-glyceroyl phosphate + NADPH + H(+). It participates in carbohydrate biosynthesis; Calvin cycle. In Nicotiana tabacum (Common tobacco), this protein is Glyceraldehyde-3-phosphate dehydrogenase B, chloroplastic (GAPB).